A 409-amino-acid chain; its full sequence is Histidine--tRNA ligase (409 aa).

This sequence belongs to the class-II aminoacyl-tRNA synthetase family. As to quaternary structure, homodimer.

It is found in the cytoplasm. The catalysed reaction is tRNA(His) + L-histidine + ATP = L-histidyl-tRNA(His) + AMP + diphosphate + H(+). This Campylobacter fetus subsp. fetus (strain 82-40) protein is Histidine--tRNA ligase.